The following is a 451-amino-acid chain: Bifunctional protein GlmU (451 aa).

The pyrophosphorylase stretch occupies residues 1 to 225 (MVVVAILAAG…YQEILGINDR (225 aa)). Residues 7 to 10 (LAAG), Lys21, Gln72, and 77 to 78 (GT) each bind UDP-N-acetyl-alpha-D-glucosamine. Asp102 is a binding site for Mg(2+). UDP-N-acetyl-alpha-D-glucosamine is bound by residues Gly139, Glu154, Asn169, and Asn223. Asn223 serves as a coordination point for Mg(2+). The linker stretch occupies residues 226–246 (LQLATAYEILQRRVKEQWMMA). An N-acetyltransferase region spans residues 247–451 (GVTLIDPNSI…PGWRKKSGES (205 aa)). Positions 328 and 346 each coordinate UDP-N-acetyl-alpha-D-glucosamine. The active-site Proton acceptor is the His358. Residues Tyr361 and Asn372 each contribute to the UDP-N-acetyl-alpha-D-glucosamine site. Residues Ala375, 381 to 382 (NY), Ser400, Ala418, and Arg435 each bind acetyl-CoA.

The protein in the N-terminal section; belongs to the N-acetylglucosamine-1-phosphate uridyltransferase family. This sequence in the C-terminal section; belongs to the transferase hexapeptide repeat family. As to quaternary structure, homotrimer. Mg(2+) is required as a cofactor.

It localises to the cytoplasm. The catalysed reaction is alpha-D-glucosamine 1-phosphate + acetyl-CoA = N-acetyl-alpha-D-glucosamine 1-phosphate + CoA + H(+). It catalyses the reaction N-acetyl-alpha-D-glucosamine 1-phosphate + UTP + H(+) = UDP-N-acetyl-alpha-D-glucosamine + diphosphate. It functions in the pathway nucleotide-sugar biosynthesis; UDP-N-acetyl-alpha-D-glucosamine biosynthesis; N-acetyl-alpha-D-glucosamine 1-phosphate from alpha-D-glucosamine 6-phosphate (route II): step 2/2. Its pathway is nucleotide-sugar biosynthesis; UDP-N-acetyl-alpha-D-glucosamine biosynthesis; UDP-N-acetyl-alpha-D-glucosamine from N-acetyl-alpha-D-glucosamine 1-phosphate: step 1/1. The protein operates within bacterial outer membrane biogenesis; LPS lipid A biosynthesis. Functionally, catalyzes the last two sequential reactions in the de novo biosynthetic pathway for UDP-N-acetylglucosamine (UDP-GlcNAc). The C-terminal domain catalyzes the transfer of acetyl group from acetyl coenzyme A to glucosamine-1-phosphate (GlcN-1-P) to produce N-acetylglucosamine-1-phosphate (GlcNAc-1-P), which is converted into UDP-GlcNAc by the transfer of uridine 5-monophosphate (from uridine 5-triphosphate), a reaction catalyzed by the N-terminal domain. The chain is Bifunctional protein GlmU from Trichormus variabilis (strain ATCC 29413 / PCC 7937) (Anabaena variabilis).